The primary structure comprises 231 residues: Protein RhiA (231 aa).

In terms of biological role, may be involved in plant-microbe interaction. This chain is Protein RhiA (rhiA), found in Rhizobium leguminosarum bv. viciae.